We begin with the raw amino-acid sequence, 955 residues long: UvrABC system protein A (955 aa).

35–42 (GLSGSGKS) contributes to the ATP binding site. 2 consecutive ABC transporter domains span residues 322–601 (WGST…EESI) and 621–951 (GHDN…RYLK). 654-661 (GVSGSGKS) lines the ATP pocket. A C4-type zinc finger spans residues 754-780 (CEACQGDGLIKIEMHFLPDVYVKCDIC).

It belongs to the ABC transporter superfamily. UvrA family. In terms of assembly, forms a heterotetramer with UvrB during the search for lesions.

It localises to the cytoplasm. In terms of biological role, the UvrABC repair system catalyzes the recognition and processing of DNA lesions. UvrA is an ATPase and a DNA-binding protein. A damage recognition complex composed of 2 UvrA and 2 UvrB subunits scans DNA for abnormalities. When the presence of a lesion has been verified by UvrB, the UvrA molecules dissociate. The sequence is that of UvrABC system protein A from Rickettsia felis (strain ATCC VR-1525 / URRWXCal2) (Rickettsia azadi).